Here is a 347-residue protein sequence, read N- to C-terminus: Methylthioribose-1-phosphate isomerase (347 aa).

Residues 45-47, Arg88, and Gln197 each bind substrate; that span reads RGA. Residue Asp238 is the Proton donor of the active site. 248–249 is a binding site for substrate; it reads NK.

Belongs to the eIF-2B alpha/beta/delta subunits family. MtnA subfamily.

It catalyses the reaction 5-(methylsulfanyl)-alpha-D-ribose 1-phosphate = 5-(methylsulfanyl)-D-ribulose 1-phosphate. It participates in amino-acid biosynthesis; L-methionine biosynthesis via salvage pathway; L-methionine from S-methyl-5-thio-alpha-D-ribose 1-phosphate: step 1/6. In terms of biological role, catalyzes the interconversion of methylthioribose-1-phosphate (MTR-1-P) into methylthioribulose-1-phosphate (MTRu-1-P). This chain is Methylthioribose-1-phosphate isomerase, found in Nostoc sp. (strain PCC 7120 / SAG 25.82 / UTEX 2576).